Here is a 179-residue protein sequence, read N- to C-terminus: Methylated-DNA--protein-cysteine methyltransferase (179 aa).

Catalysis depends on C130, which acts as the Nucleophile; methyl group acceptor.

It belongs to the MGMT family.

The protein resides in the cytoplasm. It catalyses the reaction a 6-O-methyl-2'-deoxyguanosine in DNA + L-cysteinyl-[protein] = S-methyl-L-cysteinyl-[protein] + a 2'-deoxyguanosine in DNA. The catalysed reaction is a 4-O-methyl-thymidine in DNA + L-cysteinyl-[protein] = a thymidine in DNA + S-methyl-L-cysteinyl-[protein]. Its function is as follows. Involved in the cellular defense against the biological effects of O6-methylguanine (O6-MeG) and O4-methylthymine (O4-MeT) in DNA. Repairs the methylated nucleobase in DNA by stoichiometrically transferring the methyl group to a cysteine residue in the enzyme. This is a suicide reaction: the enzyme is irreversibly inactivated. This Haemophilus influenzae (strain ATCC 51907 / DSM 11121 / KW20 / Rd) protein is Methylated-DNA--protein-cysteine methyltransferase.